We begin with the raw amino-acid sequence, 318 residues long: Glycine--tRNA ligase alpha subunit (318 aa).

The protein belongs to the class-II aminoacyl-tRNA synthetase family. In terms of assembly, tetramer of two alpha and two beta subunits.

It localises to the cytoplasm. The catalysed reaction is tRNA(Gly) + glycine + ATP = glycyl-tRNA(Gly) + AMP + diphosphate. In Chelativorans sp. (strain BNC1), this protein is Glycine--tRNA ligase alpha subunit.